The following is a 201-amino-acid chain: Large ribosomal subunit protein eL15A (201 aa).

The tract at residues Ser-161–Asn-182 is disordered. The span at Lys-169–Arg-179 shows a compositional bias: basic residues.

It belongs to the eukaryotic ribosomal protein eL15 family. Component of the large ribosomal subunit (LSU). Mature yeast ribosomes consist of a small (40S) and a large (60S) subunit. The 40S small subunit contains 1 molecule of ribosomal RNA (18S rRNA) and at least 33 different proteins. The large 60S subunit contains 3 rRNA molecules (25S, 5.8S and 5S rRNA) and at least 46 different proteins.

It is found in the cytoplasm. The protein resides in the nucleus. The protein localises to the nucleolus. Functionally, component of the ribosome, a large ribonucleoprotein complex responsible for the synthesis of proteins in the cell. The small ribosomal subunit (SSU) binds messenger RNAs (mRNAs) and translates the encoded message by selecting cognate aminoacyl-transfer RNA (tRNA) molecules. The large subunit (LSU) contains the ribosomal catalytic site termed the peptidyl transferase center (PTC), which catalyzes the formation of peptide bonds, thereby polymerizing the amino acids delivered by tRNAs into a polypeptide chain. The nascent polypeptides leave the ribosome through a tunnel in the LSU and interact with protein factors that function in enzymatic processing, targeting, and the membrane insertion of nascent chains at the exit of the ribosomal tunnel. This is Large ribosomal subunit protein eL15A (rpl15) from Schizosaccharomyces pombe (strain 972 / ATCC 24843) (Fission yeast).